The chain runs to 309 residues: MAIELNVGRKVTVTVPGSSANLGPGFDTLGLALSVYDTVEVEIIQSGLEVEVFGEGQGEVPLDGSHLVVKAIRSGLKTADAEVPGLRVVCHNNIPQSRGLGSSAAAAVAGVAAANGLAGFPLTQEQVVQLASAFEGHPDNAAASVLGGAVVSWTNLPVDGKSQPEYSAVGLDVHEGIRATALVPDFHASTEAVRRVLPSDVTHIDARFNVSRVAVMIVALQQRPDLLWEGTRDRLHQPYRADVLPVTAEWVNRLRNRGYAAYLSGAGPTVMVLSTEPVSDKILDDAREAGLRVIELEVADPVRIEVVHE.

Proline 95 to alanine 105 contributes to the ATP binding site.

The protein belongs to the GHMP kinase family. Homoserine kinase subfamily.

The protein localises to the cytoplasm. It carries out the reaction L-homoserine + ATP = O-phospho-L-homoserine + ADP + H(+). The protein operates within amino-acid biosynthesis; L-threonine biosynthesis; L-threonine from L-aspartate: step 4/5. In terms of biological role, catalyzes the ATP-dependent phosphorylation of L-homoserine to L-homoserine phosphate. In Corynebacterium efficiens (strain DSM 44549 / YS-314 / AJ 12310 / JCM 11189 / NBRC 100395), this protein is Homoserine kinase.